Consider the following 146-residue polypeptide: UPF0178 protein BC_3040 (146 aa).

Belongs to the UPF0178 family.

This Bacillus cereus (strain ATCC 14579 / DSM 31 / CCUG 7414 / JCM 2152 / NBRC 15305 / NCIMB 9373 / NCTC 2599 / NRRL B-3711) protein is UPF0178 protein BC_3040.